We begin with the raw amino-acid sequence, 234 residues long: Ubiquitin domain-containing protein 2 (234 aa).

The tract at residues 1–46 is disordered; that stretch reads MGGCVGAQHDSSGSLNENSEGTGVALGRNQPLKKEKPKWKSDYPMT. Polar residues predominate over residues 9–21; it reads HDSSGSLNENSEG. Positions 32–41 are enriched in basic and acidic residues; the sequence is LKKEKPKWKS. A Ubiquitin-like domain is found at 152–227; the sequence is SQLRLRLSTG…VQVIMSQPLQ (76 aa).

Its subcellular location is the cytoplasm. This is Ubiquitin domain-containing protein 2 (UBTD2) from Bos taurus (Bovine).